The chain runs to 189 residues: ATP synthase subunit delta (189 aa).

The protein belongs to the ATPase delta chain family. In terms of assembly, F-type ATPases have 2 components, F(1) - the catalytic core - and F(0) - the membrane proton channel. F(1) has five subunits: alpha(3), beta(3), gamma(1), delta(1), epsilon(1). F(0) has three main subunits: a(1), b(2) and c(10-14). The alpha and beta chains form an alternating ring which encloses part of the gamma chain. F(1) is attached to F(0) by a central stalk formed by the gamma and epsilon chains, while a peripheral stalk is formed by the delta and b chains.

It is found in the cell inner membrane. Functionally, f(1)F(0) ATP synthase produces ATP from ADP in the presence of a proton or sodium gradient. F-type ATPases consist of two structural domains, F(1) containing the extramembraneous catalytic core and F(0) containing the membrane proton channel, linked together by a central stalk and a peripheral stalk. During catalysis, ATP synthesis in the catalytic domain of F(1) is coupled via a rotary mechanism of the central stalk subunits to proton translocation. In terms of biological role, this protein is part of the stalk that links CF(0) to CF(1). It either transmits conformational changes from CF(0) to CF(1) or is implicated in proton conduction. The chain is ATP synthase subunit delta from Methylorubrum extorquens (strain CM4 / NCIMB 13688) (Methylobacterium extorquens).